A 908-amino-acid polypeptide reads, in one-letter code: MFGKLLTKVFGSRNDRTLKGLQKIVISINALEADYEKLTDEALKAKTAEFRERLAAGASLDSIMAEAFATVREASKRVFDMRHFDVQLLGGMVLDSNRIAEMRTGEGKTLTATLPAYLNALTGKGVHVITVNDYLARRDAENNRPLFEFLGLTVGINVAGLGQHEKKAAYNADITYGTNNEFGFDYLRDNMAFSPQERVQRPLHYALIDEVDSILIDEARTPLIISGAAEDSSELYIKINTLIPNLIRQDKEDTEEYVGEGDYSIDEKAKQVHFTERGQEKVENLLIERGMLAEGDSLYSAANISLLHHVNAALRAHTLFERDVDYIVQDNEVIIVDEHTGRTMPGRRWSEGLHQAVEAKEGVHIQNENQTLASITFQNYFRQYEKLAGMTGTADTEAFEFQHIYGLDTVVVPTNRPMVRKDMADLVYLTADEKYQAIIKDIKDCRERGQPVLVGTVSIEQSELLARLMVQEKIPHEVLNAKFHEREAEIVAQAGRTGSVTIATNMAGRGTDIVLGGNWNMEIDELDNPTAEQKAKIKADWQIRHDEVVAAGGLHILGTERHESRRIDNQLRGRAGRQGDAGSSRFYLSMEDSLMRIFASDRVSGMMKKLGMEEGEAIEHPWVSRAIENAQRKVEARNFDIRKQLLEFDDVANDQRQVVYAQRNELMDAESIEDTIQNIQDDVIGAVIDQYIPPQSVEELWDIPGLEQRLHQEFMLKLPIQEWLDKEDDLHEESLRERIITAWGDAYKAKEEMVGAQVLRQFEKAVMLQTLDGLWKEHLAAMDHLRQGIHLRGYAQKNPKQEYKRESFELFQQLLNTLKHDVISVLSKVQVQAQSDVEEMEARRREEDAKIQRDYQHAAAESLVGSSDEHEAVTAQAPMIRDGEKVGRNDPCPCGSGRKYKQCHGKLS.

Residues glutamine 87, glycine 105–threonine 109, and aspartate 512 each bind ATP. The tract at residues alanine 860 to serine 908 is disordered. Residues cysteine 892, cysteine 894, cysteine 903, and histidine 904 each coordinate Zn(2+). Positions arginine 898–serine 908 are enriched in basic residues.

This sequence belongs to the SecA family. As to quaternary structure, monomer and homodimer. Part of the essential Sec protein translocation apparatus which comprises SecA, SecYEG and auxiliary proteins SecDF-YajC and YidC. Zn(2+) is required as a cofactor.

It is found in the cell inner membrane. Its subcellular location is the cytoplasm. It carries out the reaction ATP + H2O + cellular proteinSide 1 = ADP + phosphate + cellular proteinSide 2.. Its function is as follows. Part of the Sec protein translocase complex. Interacts with the SecYEG preprotein conducting channel. Has a central role in coupling the hydrolysis of ATP to the transfer of proteins into and across the cell membrane, serving both as a receptor for the preprotein-SecB complex and as an ATP-driven molecular motor driving the stepwise translocation of polypeptide chains across the membrane. The polypeptide is Protein translocase subunit SecA (Shewanella baltica (strain OS155 / ATCC BAA-1091)).